The primary structure comprises 64 residues: Large ribosomal subunit protein bL35 (64 aa).

The protein belongs to the bacterial ribosomal protein bL35 family.

This Vibrio metschnikovii protein is Large ribosomal subunit protein bL35.